The following is a 503-amino-acid chain: Glutamate--tRNA ligase (503 aa).

The 'HIGH' region signature appears at P26–L36. Residues T126 to A148 are disordered. The span at V130 to A148 shows a compositional bias: basic and acidic residues. The 'KMSKS' region motif lies at K270–R274. K273 is a binding site for ATP.

This sequence belongs to the class-I aminoacyl-tRNA synthetase family. Glutamate--tRNA ligase type 1 subfamily. In terms of assembly, monomer.

The protein resides in the cytoplasm. It catalyses the reaction tRNA(Glu) + L-glutamate + ATP = L-glutamyl-tRNA(Glu) + AMP + diphosphate. Functionally, catalyzes the attachment of glutamate to tRNA(Glu) in a two-step reaction: glutamate is first activated by ATP to form Glu-AMP and then transferred to the acceptor end of tRNA(Glu). The chain is Glutamate--tRNA ligase from Saccharopolyspora erythraea (strain ATCC 11635 / DSM 40517 / JCM 4748 / NBRC 13426 / NCIMB 8594 / NRRL 2338).